The primary structure comprises 147 residues: Large ribosomal subunit protein uL23A (147 aa).

Residues 1–10 (MAPSAPAKTA) show a composition bias toward low complexity. The segment at 1-29 (MAPSAPAKTAKALDAKKKVVKGKRTTHRR) is disordered. The span at 18–29 (KVVKGKRTTHRR) shows a compositional bias: basic residues.

It belongs to the universal ribosomal protein uL23 family.

Its function is as follows. This protein binds to a specific region on the 26S rRNA. In Caenorhabditis elegans, this protein is Large ribosomal subunit protein uL23A.